Reading from the N-terminus, the 318-residue chain is GTP cyclohydrolase MptA (318 aa).

The protein belongs to the GTP cyclohydrolase IV family. In terms of assembly, homodimer. The cofactor is Fe(2+).

The enzyme catalyses GTP + H2O = 7,8-dihydroneopterin 2',3'-cyclic phosphate + formate + diphosphate + H(+). The protein operates within cofactor biosynthesis; 5,6,7,8-tetrahydromethanopterin biosynthesis. In terms of biological role, converts GTP to 7,8-dihydro-D-neopterin 2',3'-cyclic phosphate, the first intermediate in the biosynthesis of coenzyme methanopterin. This is GTP cyclohydrolase MptA from Methanothermobacter thermautotrophicus (strain ATCC 29096 / DSM 1053 / JCM 10044 / NBRC 100330 / Delta H) (Methanobacterium thermoautotrophicum).